A 1503-amino-acid polypeptide reads, in one-letter code: MAAPAEPCAGQGVWNQTEPEPAATSLLSLCFLRTAGVWVPPMYLWVLGPIYLLFIHHHGRGYLRMSPLFKAKMVLGFALIVLCTSSVAVALWKIQQGTPEAPEFLIHPTVWLTTMSFAVFLIHTERKKGVQSSGVLFGYWLLCFVLPATNAAQQASGAGFQSDPVRHLSTYLCLSLVVAQFVLSCLADQPPFFPEDPQQSNPCPETGAAFPSKATFWWVSGLVWRGYRRPLRPKDLWSLGRENSSEELVSRLEKEWMRNRSAARRHNKAIAFKRKGGSGMKAPETEPFLRQEGSQWRPLLKAIWQVFHSTFLLGTLSLIISDVFRFTVPKLLSLFLEFIGDPKPPAWKGYLLAVLMFLSACLQTLFEQQNMYRLKVLQMRLRSAITGLVYRKVLALSSGSRKASAVGDVVNLVSVDVQRLTESVLYLNGLWLPLVWIVVCFVYLWQLLGPSALTAIAVFLSLLPLNFFISKKRNHHQEEQMRQKDSRARLTSSILRNSKTIKFHGWEGAFLDRVLGIRGQELGALRTSGLLFSVSLVSFQVSTFLVALVVFAVHTLVAENAMNAEKAFVTLTVLNILNKAQAFLPFSIHSLVQARVSFDRLVTFLCLEEVDPGVVDSSSSGSAAGKDCITIHSATFAWSQESPPCLHRINLTVPQGCLLAVVGPVGAGKSSLLSALLGELSKVEGFVSIEGAVAYVPQEAWVQNTSVVENVCFGQELDPPWLERVLEACALQPDVDSFPEGIHTSIGEQGMNLSGGQKQRLSLARAVYRKAAVYLLDDPLAALDAHVGQHVFNQVIGPGGLLQGTTRILVTHALHILPQADWIIVLANGAIAEMGSYQELLQRKGALMCLLDQARQPGDRGEGETEPGTSTKDPRGTSAGRRPELRRERSIKSVPEKDRTTSEAQTEVPLDDPDRAGWPAGKDSIQYGRVKATVHLAYLRAVGTPLCLYALFLFLCQQVASFCRGYWLSLWADDPAVGGQQTQAALRGGIFGLLGCLQAIGLFASMAAVLLGGARASRLLFQRLLWDVVRSPISFFERTPIGHLLNRFSKETDTVDVDIPDKLRSLLMYAFGLLEVSLVVAVATPLATVAILPLFLLYAGFQSLYVVSSCQLRRLESASYSSVCSHMAETFQGSTVVRAFRTQAPFVAQNNARVDESQRISFPRLVADRWLAANVELLGNGLVFAAATCAVLSKAHLSAGLVGFSVSAALQVTQTLQWVVRNWTDLENSIVSVERMQDYAWTPKEAPWRLPTCAAQPPWPQGGQIEFRDFGLRYRPELPLAVQGVSFKIHAGEKVGIVGRTGAGKSSLASGLLRLQEAAEGGIWIDGVPIAHVGLHTLRSRISIIPQDPILFPGSLRMNLDLLQEHSDEAIWAALETVQLKALVASLPGQLQYKCADRGEDLSVGQKQLLCLARALLRKTQILILDEATAAVDPGTELQMQAMLGSWFAQCTVLLIAHRLRSVMDCARVLVMDKGQVAESGSPAQLLAQKGLFYRLAQESGLV.

At 1–31 (MAAPAEPCAGQGVWNQTEPEPAATSLLSLCF) the chain is on the extracellular side. Residue Asn15 is glycosylated (N-linked (GlcNAc...) asparagine). The chain crosses the membrane as a helical span at residues 32 to 52 (LRTAGVWVPPMYLWVLGPIYL). The Cytoplasmic portion of the chain corresponds to 53 to 72 (LFIHHHGRGYLRMSPLFKAK). The chain crosses the membrane as a helical span at residues 73 to 93 (MVLGFALIVLCTSSVAVALWK). The Extracellular portion of the chain corresponds to 94-98 (IQQGT). A helical transmembrane segment spans residues 99–119 (PEAPEFLIHPTVWLTTMSFAV). At 120–131 (FLIHTERKKGVQ) the chain is on the cytoplasmic side. A helical transmembrane segment spans residues 132-149 (SSGVLFGYWLLCFVLPAT). Over 150–167 (NAAQQASGAGFQSDPVRH) the chain is Extracellular. Residues 168 to 188 (LSTYLCLSLVVAQFVLSCLAD) traverse the membrane as a helical segment. Over 189–302 (QPPFFPEDPQ…GSQWRPLLKA (114 aa)) the chain is Cytoplasmic. Residues 303 to 323 (IWQVFHSTFLLGTLSLIISDV) traverse the membrane as a helical segment. The region spanning 311–593 (FLLGTLSLII…LPFSIHSLVQ (283 aa)) is the ABC transmembrane type-1 1 domain. At 324 to 349 (FRFTVPKLLSLFLEFIGDPKPPAWKG) the chain is on the extracellular side. A helical membrane pass occupies residues 350–370 (YLLAVLMFLSACLQTLFEQQN). Topologically, residues 371–426 (MYRLKVLQMRLRSAITGLVYRKVLALSSGSRKASAVGDVVNLVSVDVQRLTESVLY) are cytoplasmic. Residues 427–447 (LNGLWLPLVWIVVCFVYLWQL) form a helical membrane-spanning segment. Topologically, residues 448–450 (LGP) are extracellular. A helical membrane pass occupies residues 451–471 (SALTAIAVFLSLLPLNFFISK). Residues 472-533 (KRNHHQEEQM…ALRTSGLLFS (62 aa)) are Cytoplasmic-facing. The chain crosses the membrane as a helical span at residues 534–554 (VSLVSFQVSTFLVALVVFAVH). Over 555–575 (TLVAENAMNAEKAFVTLTVLN) the chain is Extracellular. Residues 576–596 (ILNKAQAFLPFSIHSLVQARV) form a helical membrane-spanning segment. Topologically, residues 597 to 939 (SFDRLVTFLC…VKATVHLAYL (343 aa)) are cytoplasmic. One can recognise an ABC transporter 1 domain in the interval 629–853 (ITIHSATFAW…KGALMCLLDQ (225 aa)). 663–670 (GPVGAGKS) is an ATP binding site. A disordered region spans residues 854–919 (ARQPGDRGEG…LDDPDRAGWP (66 aa)). Residues 881–901 (RRPELRRERSIKSVPEKDRTT) show a composition bias toward basic and acidic residues. A helical transmembrane segment spans residues 940 to 960 (RAVGTPLCLYALFLFLCQQVA). Residues 947–1228 (CLYALFLFLC…VVRNWTDLEN (282 aa)) form the ABC transmembrane type-1 2 domain. Over 961 to 997 (SFCRGYWLSLWADDPAVGGQQTQAALRGGIFGLLGCL) the chain is Extracellular. Residues 998–1018 (QAIGLFASMAAVLLGGARASR) traverse the membrane as a helical segment. The Cytoplasmic segment spans residues 1019 to 1061 (LLFQRLLWDVVRSPISFFERTPIGHLLNRFSKETDTVDVDIPD). A helical transmembrane segment spans residues 1062 to 1082 (KLRSLLMYAFGLLEVSLVVAV). A topological domain (extracellular) is located at residue Ala1083. Residues 1084–1104 (TPLATVAILPLFLLYAGFQSL) traverse the membrane as a helical segment. At 1105 to 1175 (YVVSSCQLRR…VADRWLAANV (71 aa)) the chain is on the cytoplasmic side. Residues 1176-1196 (ELLGNGLVFAAATCAVLSKAH) traverse the membrane as a helical segment. Residues 1197–1198 (LS) are Extracellular-facing. Residues 1199 to 1219 (AGLVGFSVSAALQVTQTLQWV) traverse the membrane as a helical segment. Residues 1220 to 1503 (VRNWTDLENS…YRLAQESGLV (284 aa)) are Cytoplasmic-facing. An ABC transporter 2 domain is found at 1265–1499 (IEFRDFGLRY…KGLFYRLAQE (235 aa)). At Ser1286 the chain carries Phosphoserine. 1299-1306 (GRTGAGKS) is an ATP binding site.

This sequence belongs to the ABC transporter superfamily. ABCC family. Conjugate transporter (TC 3.A.1.208) subfamily. It depends on Mg(2+) as a cofactor. Post-translationally, glycosylated. Expressed in kidney and liver. Very low expression in other tissues. In testis, localized to peritubular myoid cells, Leydig cells, along the basal membrane of Sertoli cells and moderately in the adluminal compartment of the seminiferous tubules.

It is found in the basal cell membrane. The protein localises to the basolateral cell membrane. It localises to the endoplasmic reticulum membrane. The enzyme catalyses an S-substituted glutathione(in) + ATP + H2O = an S-substituted glutathione(out) + ADP + phosphate + H(+). The catalysed reaction is leukotriene C4(in) + ATP + H2O = leukotriene C4(out) + ADP + phosphate + H(+). With respect to regulation, LTC4 transport is completely inhibited by 1 mM orthovanadate. Its function is as follows. ATP-dependent transporter of the ATP-binding cassette (ABC) family that actively extrudes physiological compounds, and xenobiotics from cells. Mediates ATP-dependent transport of glutathione conjugates such as leukotriene-c4 (LTC4) and N-ethylmaleimide S-glutathione (NEM-GS) (in vitro), and an anionic cyclopentapeptide endothelin antagonist, BQ-123. May contribute to regulate the transport of organic compounds in testes across the blood-testis-barrier. Does not appear to actively transport drugs outside the cell. Confers low levels of cellular resistance to etoposide, teniposide, anthracyclines and cisplatin. In terms of biological role, mediates the release of nucleoside triphosphates, predominantly ATP, into the circulation, where it is rapidly converted into AMP and the mineralization inhibitor inorganic pyrophosphate (PPi) by the ecto-enzyme ectonucleotide pyrophosphatase phosphodiesterase 1 (ENPP1), therefore playing a role in PPi homeostasis. Inhibits TNF-alpha-mediated apoptosis through blocking one or more caspases. This is ATP-binding cassette sub-family C member 6 (ABCC6) from Homo sapiens (Human).